The sequence spans 185 residues: Ribosome-recycling factor (185 aa).

It belongs to the RRF family.

Its subcellular location is the cytoplasm. Responsible for the release of ribosomes from messenger RNA at the termination of protein biosynthesis. May increase the efficiency of translation by recycling ribosomes from one round of translation to another. This Xanthomonas campestris pv. campestris (strain 8004) protein is Ribosome-recycling factor.